The sequence spans 554 residues: 3-(3-hydroxy-phenyl)propionate/3-hydroxycinnamic acid hydroxylase (554 aa).

FAD-binding positions include 17 to 46 (QVAIAGAGPVGLMMANYLGQMGIDVLVVEK) and 285 to 295 (FRIDRVLLAGD).

Belongs to the PheA/TfdB FAD monooxygenase family. Requires FAD as cofactor.

The enzyme catalyses 3-(3-hydroxyphenyl)propanoate + NADH + O2 + H(+) = 3-(2,3-dihydroxyphenyl)propanoate + NAD(+) + H2O. The catalysed reaction is (2E)-3-(3-hydroxyphenyl)prop-2-enoate + NADH + O2 + H(+) = (2E)-3-(2,3-dihydroxyphenyl)prop-2-enoate + NAD(+) + H2O. It functions in the pathway aromatic compound metabolism; 3-phenylpropanoate degradation. Functionally, catalyzes the insertion of one atom of molecular oxygen into position 2 of the phenyl ring of 3-(3-hydroxyphenyl)propionate (3-HPP) and hydroxycinnamic acid (3HCI). This chain is 3-(3-hydroxy-phenyl)propionate/3-hydroxycinnamic acid hydroxylase, found in Escherichia coli O17:K52:H18 (strain UMN026 / ExPEC).